The following is a 906-amino-acid chain: MVSFGGLARKIFGSSNDRRVKTLRQRAEQITALEKNYENLTDEQLQAKTAEFRAALAEGKSLDSLLPDAFATAREAAKRVLGMRPFDVQLIGGMVLHERGIAEMRTGEGKTLMATLPVYLNALEGKGVHVVTVNDYLATRDAETMGRLYNFLGLTVGVIKHGLDDDERRAAYACDITYGTNNELGFDYLRDNMKYERAQMVQRPHNYAIVDEVDSILIDEARTPLIISGPLEDRSDFYNLIDTFIPPLAEEDYEVDEKQKTAIFTEVGTEKVEKLLEAAGHLKGESLYDIENVAVVHHLNNALRAHKLFQRDKDYIVRNDEIVIIDEFTGRMMPGRRYSEGLHQALEAKEHVTIQPENQTLASITFQNYFRMYNKLSGMTGTAATEAEEFGNIYGLEVLEIPTNLPVQRIDEDDEVYRTVEEKYRAIVRDIRASHEKGQPILVGTTSIEKSEQLAERLRREGIKGFQVLNARYHEQEAYIIAQAGVPGAVTIATNMAGRGTDIQLGGNLEMRVRQELSDVPEGPEREEKIAAIKADIAQLKEKALAAGGLYVLATERHESRRIDNQLRGRSGRQGDPGRSKFFLSLQDDLMRIFGSDRMDGMLQKLGLKEDEAIVHPWINKALEKAQKKVEARNFEIRKNLLKYDDVMNDQRKVIFEQRLEMMDEEDLTETVAEMRHEVIEDMVILRIPKDAYAEKWDIAGLKQDIASKLNLDLPVEEWAKEEGIAEEEFENRIKEAADKAAAEKAERFGPQIMTYVEKSVIMQSLDNLWREHLVNLDHLRSVVGFRGYAQRDPLNEYKTEAFELFQTMLANLREVVISQLMRVEIVREAPPEPQLPPMAGLHIDGATGENDFDEAIWAEHQHDDRIVPPAQRDPADPRTWGKVSRNEPCPCGSGKKYKHCHGAFE.

ATP is bound by residues Q89, 107-111, and D502; that span reads GEGKT. The disordered stretch occupies residues 868 to 887; that stretch reads VPPAQRDPADPRTWGKVSRN. Zn(2+) contacts are provided by C890, C892, C901, and H902.

It belongs to the SecA family. Monomer and homodimer. Part of the essential Sec protein translocation apparatus which comprises SecA, SecYEG and auxiliary proteins SecDF-YajC and YidC. Requires Zn(2+) as cofactor.

The protein localises to the cell inner membrane. It is found in the cytoplasm. The catalysed reaction is ATP + H2O + cellular proteinSide 1 = ADP + phosphate + cellular proteinSide 2.. Its function is as follows. Part of the Sec protein translocase complex. Interacts with the SecYEG preprotein conducting channel. Has a central role in coupling the hydrolysis of ATP to the transfer of proteins into and across the cell membrane, serving both as a receptor for the preprotein-SecB complex and as an ATP-driven molecular motor driving the stepwise translocation of polypeptide chains across the membrane. The polypeptide is Protein translocase subunit SecA (Brucella melitensis biotype 1 (strain ATCC 23456 / CCUG 17765 / NCTC 10094 / 16M)).